The following is a 2211-amino-acid chain: Activating signal cointegrator 1 complex subunit 3 (2211 aa).

Residues 495-678 (ETAYNTNENM…FLHVNPYIGL (184 aa)) form the Helicase ATP-binding 1 domain. 508-515 (APTGAGKT) is a binding site for ATP. Positions 620–623 (DEVH) match the DEVH box motif. In terms of domain architecture, Helicase C-terminal 1 spans 717 to 923 (VLKQIMAGHQ…GTVTNVEEAV (207 aa)). Positions 987 to 1296 (STDLGRTASH…GAEAVCIINF (310 aa)) constitute an SEC63 1 domain. The region spanning 1345 to 1520 (HTLYHTDCNV…WLNINQMGLF (176 aa)) is the Helicase ATP-binding 2 domain. 1358 to 1365 (APTGSGKT) contacts ATP. Positions 1462 to 1465 (DEIH) match the DEIH box motif. In terms of domain architecture, Helicase C-terminal 2 spans 1553–1760 (PAFQAIRSHS…GTITSKQDAM (208 aa)). Positions 1821 to 2184 (PLTYGRIASY…YLGMDQQYDI (364 aa)) constitute an SEC63 2 domain.

Belongs to the helicase family.

The protein resides in the nucleus. It localises to the nucleus speckle. The protein localises to the cytoplasm. It is found in the cytosol. The enzyme catalyses Couples ATP hydrolysis with the unwinding of duplex DNA by translocating in the 3'-5' direction.. It carries out the reaction ATP + H2O = ADP + phosphate + H(+). In terms of biological role, 3'-5' DNA helicase involved in repair of alkylated DNA. Promotes DNA unwinding to generate single-stranded substrate needed for ALKBH3, enabling ALKBH3 to process alkylated N3-methylcytosine (3mC) within double-stranded regions. Also involved in activation of the ribosome quality control (RQC) pathway, a pathway that degrades nascent peptide chains during problematic translation. Drives the splitting of stalled ribosomes. The protein is Activating signal cointegrator 1 complex subunit 3 (ascc3) of Gallus gallus (Chicken).